A 199-amino-acid polypeptide reads, in one-letter code: Ribonuclease HII (199 aa).

The RNase H type-2 domain occupies 9 to 198; the sequence is QFVAGVDEVG…VRAAIEQMNL (190 aa). Residues Asp-15, Glu-16, and Asp-107 each coordinate a divalent metal cation.

It belongs to the RNase HII family. It depends on Mn(2+) as a cofactor. Mg(2+) serves as cofactor.

Its subcellular location is the cytoplasm. The catalysed reaction is Endonucleolytic cleavage to 5'-phosphomonoester.. Endonuclease that specifically degrades the RNA of RNA-DNA hybrids. This chain is Ribonuclease HII, found in Saccharophagus degradans (strain 2-40 / ATCC 43961 / DSM 17024).